We begin with the raw amino-acid sequence, 288 residues long: Phosphatidylserine decarboxylase proenzyme (288 aa).

Residues D89, H146, and S252 each act as charge relay system; for autoendoproteolytic cleavage activity in the active site. The active-site Schiff-base intermediate with substrate; via pyruvic acid; for decarboxylase activity is the S252. S252 bears the Pyruvic acid (Ser); by autocatalysis mark.

Belongs to the phosphatidylserine decarboxylase family. PSD-B subfamily. Prokaryotic type I sub-subfamily. As to quaternary structure, heterodimer of a large membrane-associated beta subunit and a small pyruvoyl-containing alpha subunit. Pyruvate serves as cofactor. Is synthesized initially as an inactive proenzyme. Formation of the active enzyme involves a self-maturation process in which the active site pyruvoyl group is generated from an internal serine residue via an autocatalytic post-translational modification. Two non-identical subunits are generated from the proenzyme in this reaction, and the pyruvate is formed at the N-terminus of the alpha chain, which is derived from the carboxyl end of the proenzyme. The autoendoproteolytic cleavage occurs by a canonical serine protease mechanism, in which the side chain hydroxyl group of the serine supplies its oxygen atom to form the C-terminus of the beta chain, while the remainder of the serine residue undergoes an oxidative deamination to produce ammonia and the pyruvoyl prosthetic group on the alpha chain. During this reaction, the Ser that is part of the protease active site of the proenzyme becomes the pyruvoyl prosthetic group, which constitutes an essential element of the active site of the mature decarboxylase.

It is found in the cell membrane. It carries out the reaction a 1,2-diacyl-sn-glycero-3-phospho-L-serine + H(+) = a 1,2-diacyl-sn-glycero-3-phosphoethanolamine + CO2. It functions in the pathway phospholipid metabolism; phosphatidylethanolamine biosynthesis; phosphatidylethanolamine from CDP-diacylglycerol: step 2/2. In terms of biological role, catalyzes the formation of phosphatidylethanolamine (PtdEtn) from phosphatidylserine (PtdSer). The protein is Phosphatidylserine decarboxylase proenzyme of Shewanella frigidimarina (strain NCIMB 400).